A 734-amino-acid chain; its full sequence is MRFSDSIEAGIYEPWRDKYMNYPELKHLLKTEEEAPSWGENDESKFVSVMDAQLEKVYAFHLEILKELNESVDWVKSKVSASQEPDGPPISKEEAIKLLERLDSCTETVKKLEKYTRLNLTGFFKIVKKHDKLYPGYSLRPVFQVRLRACPLGSVQFNPLLAEIFSLYNTLRDGLSAPSNSVQVKPKHEHNVDYNSSMYRRRTFRFWVHPDNVMEVKTYIMRHLPVLYYSGKQGFDKDQNGVSGILDPISTCLYLDNSNFDLYSQNLERSEQAYSLRLHWYGKLTPKTDIIVERMVRQGSTLSHSEDRFTIREKKVRELLSGRYDFRKVEDDHSTTASDQKKKLIEDVEQLIVDNHLQPVLRSVYTRTAFQIPGDDEVRINLDSDWVMIREDSLDIERPCRDPEDWHRHDIDDADFPYKHLRKGEYSRFPYSVLEIRECVRYDEDEPLWISELRNSHLISEIDGFSKYEHGVAILFEKYVSLLPMWVFSMDQDIRKDLQEVYSHPEGSAGSRNVYIKRRNQRVLKQNMTPEPSQPSPLVNRLKANEMHPVSEEPEDNREVYRNEHGDHFNFRSIPGLLKPSTYGSFKHHGKTFVTPPHIKKPEIPLRVSGPIKVEAKVWLANERTFLKWLHVVVLLGSLALALYNSAGERLGQAFGVVYTLLAIFIGFYAWKLHAKRSQMIKSRSPAPMTDYWGPLIVGTALAISLIVNMSFALKDAVYQNLIEPDRLLVKLFT.

An SPX domain is found at 1-144; the sequence is MRFSDSIEAG…PGYSLRPVFQ (144 aa). The Cytoplasmic segment spans residues 1–624; it reads MRFSDSIEAG…EAKVWLANER (624 aa). Residues 125–132 are important for inositol polyphosphate binding; sequence KIVKKHDK. The residue at position 181 (Ser181) is a Phosphoserine. At Thr529 the chain carries Phosphothreonine. Tyr583 bears the Phosphotyrosine mark. A helical transmembrane segment spans residues 625 to 645; that stretch reads TFLKWLHVVVLLGSLALALYN. Topologically, residues 646-650 are vacuolar; the sequence is SAGER. Residues 651–671 form a helical membrane-spanning segment; the sequence is LGQAFGVVYTLLAIFIGFYAW. The Cytoplasmic segment spans residues 672 to 693; that stretch reads KLHAKRSQMIKSRSPAPMTDYW. A helical transmembrane segment spans residues 694–714; it reads GPLIVGTALAISLIVNMSFAL. Over 715–734 the chain is Vacuolar; it reads KDAVYQNLIEPDRLLVKLFT.

Belongs to the VTC2/3 family. The VTC core complex is an integral membrane heterooligomer composed of at least the catalytic subunit vtc4 and the accessory subunits vtc1 and vtc2. vtc1 is a small membrane protein without hydrophilic domain. Vtc2 and vtc4 are related and have 2 hydrophilic domains that face the cytosol, an N-terminal SPX domain and the central core domain. The central core in vtc4 is the catalytic domain.

The protein resides in the vacuole membrane. Its function is as follows. Accessory subunit of the vacuolar transporter chaperone (VTC) complex. The VTC complex acts as a vacuolar polyphosphate polymerase that catalyzes the synthesis of inorganic polyphosphate (polyP) via transfer of phosphate from ATP to a growing polyP chain, releasing ADP. VTC exposes its catalytic domain vtc4 to the cytosol, where the growing polyP chain winds through a tunnel-shaped pocket, integrating cytoplasmic polymer synthesis with polyP membrane translocation. The VTC complex carries 9 vacuolar transmembrane domains, which are likely to constitute the translocation channel into the organelle lumen. PolyP synthesis is tightly coupled to its transport into the vacuole lumen, in order to avoid otherwise toxic intermediates in the cytosol, and it depends on the proton gradient across the membrane, formed by V-ATPase. The VTC complex also plays a role in vacuolar membrane fusion. This chain is Vacuolar transporter chaperone complex subunit 2 (vtc2), found in Schizosaccharomyces pombe (strain 972 / ATCC 24843) (Fission yeast).